Consider the following 170-residue polypeptide: Non-specific lipid transfer protein GPI-anchored 5 (170 aa).

A signal peptide spans 1–24 (MKMEMGLVFLTVFMAVMSSTMVSA). 4 disulfide bridges follow: cysteine 28/cysteine 69, cysteine 38/cysteine 53, cysteine 54/cysteine 95, and cysteine 67/cysteine 105. Asparagine 45, asparagine 84, asparagine 124, and asparagine 130 each carry an N-linked (GlcNAc...) asparagine glycan. The interval 105–148 (CNTGGGGGGSTSDSPAESPNSSGPGNGSKTVPVGEGDGPPSSDG) is disordered. Serine 146 is lipidated: GPI-anchor amidated serine. A propeptide spans 147–170 (DGSSIKFSFPLIAFFSAVSYMAIF) (removed in mature form).

It belongs to the plant LTP family. In terms of tissue distribution, expressed in seedlings, preferentially in the endodermis of hypocotyls and roots, as well as in anthers, sepals and flower tori.

It is found in the cell membrane. In terms of biological role, lipid transfer protein involved in seed and ovule maturation and development, probably by regulating the fatty acids homeostasis during suberin and sporopollenin biosynthesis or deposition. Contributes to pre-invasive defense against some non-host powdery mildew pathogens by preventing the penetration of the epidermal cell wall by the fungal agents (e.g. Blumeria graminis f. sp. hordei (Bgh)). This is Non-specific lipid transfer protein GPI-anchored 5 from Arabidopsis thaliana (Mouse-ear cress).